The sequence spans 238 residues: MTPHINAPAGAFADVVLMPGDPLRAKYIAETFLENAEQVTNVRNMFGYTGTYKGRRISIMGHGMGIPSCSIYAKELITEYGVKKIIRVGSCGAVRADVKLRDIVIGSGACTDSKVNRIRFRDNDFAAIADFEMTLAAYQVAKQKNISVQVGNLFSADLFYTPDVAMFDVMEKYGILGVEMEAAGIYVVAAEYGVKSLAICTVSDHIRSGEKLSAEDRQLTFNEMIEIALESVLIGDQT.

H4 contacts a purine D-ribonucleoside. Residues G20, R24, R43, and 87–90 contribute to the phosphate site; that span reads RVGS. A purine D-ribonucleoside is bound by residues 179–181 and 203–204; these read EME and SD. Residue D204 is the Proton donor of the active site.

Belongs to the PNP/UDP phosphorylase family. As to quaternary structure, homohexamer; trimer of homodimers.

It carries out the reaction a purine D-ribonucleoside + phosphate = a purine nucleobase + alpha-D-ribose 1-phosphate. It catalyses the reaction a purine 2'-deoxy-D-ribonucleoside + phosphate = a purine nucleobase + 2-deoxy-alpha-D-ribose 1-phosphate. Its function is as follows. Catalyzes the reversible phosphorolytic breakdown of the N-glycosidic bond in the beta-(deoxy)ribonucleoside molecules, with the formation of the corresponding free purine bases and pentose-1-phosphate. In Haemophilus ducreyi (strain 35000HP / ATCC 700724), this protein is Purine nucleoside phosphorylase DeoD-type.